The following is a 439-amino-acid chain: Ribulose bisphosphate carboxylase/oxygenase activase 2, chloroplastic (439 aa).

A chloroplast-targeting transit peptide spans 1–58 (MATSVSTIGAANKAPLSLNNSVAGTSVPSTAFFGKTLKKVYGKGVSSPKVTNRSLRIA). Residue 169–176 (GGKGQGKS) participates in ATP binding.

The protein belongs to the RuBisCO activase family.

The protein localises to the plastid. It localises to the chloroplast stroma. In terms of biological role, activation of RuBisCO (ribulose-1,5-bisphosphate carboxylase/oxygenase; EC 4.1.1.39) involves the ATP-dependent carboxylation of the epsilon-amino group of lysine leading to a carbamate structure. This chain is Ribulose bisphosphate carboxylase/oxygenase activase 2, chloroplastic (RCA), found in Nicotiana tabacum (Common tobacco).